Here is a 312-residue protein sequence, read N- to C-terminus: Glyoxylate/hydroxypyruvate reductase A (312 aa).

The active site involves Arg227. His275 acts as the Proton donor in catalysis.

This sequence belongs to the D-isomer specific 2-hydroxyacid dehydrogenase family. GhrA subfamily.

The protein localises to the cytoplasm. The catalysed reaction is glycolate + NADP(+) = glyoxylate + NADPH + H(+). The enzyme catalyses (R)-glycerate + NAD(+) = 3-hydroxypyruvate + NADH + H(+). It catalyses the reaction (R)-glycerate + NADP(+) = 3-hydroxypyruvate + NADPH + H(+). In terms of biological role, catalyzes the NADPH-dependent reduction of glyoxylate and hydroxypyruvate into glycolate and glycerate, respectively. This Salmonella paratyphi B (strain ATCC BAA-1250 / SPB7) protein is Glyoxylate/hydroxypyruvate reductase A.